The sequence spans 127 residues: Flagellar hook-basal body complex protein FliE (127 aa).

This sequence belongs to the FliE family.

It localises to the bacterial flagellum basal body. This is Flagellar hook-basal body complex protein FliE from Leptospira interrogans serogroup Icterohaemorrhagiae serovar copenhageni (strain Fiocruz L1-130).